The chain runs to 80 residues: Pigment-dispersing hormone peptides (80 aa).

A signal peptide spans 1–20; sequence MANYITIAIIVGIVCGQALS. A propeptide spanning residues 21–58 is cleaved from the precursor; it reads VEDVDRNLLELNLPYGRGLDSELQLARLMLAAPRFCHP. Alanine 78 carries the post-translational modification Alanine amide.

It belongs to the arthropod PDH family. Expressed in the brain (at protein level).

It localises to the secreted. Functionally, neuropeptide PDF is the main transmitter regulating circadian locomotor rhythms. The polypeptide is Pigment-dispersing hormone peptides (Camponotus floridanus (Florida carpenter ant)).